The following is a 141-amino-acid chain: Large ribosomal subunit protein uL11 (141 aa).

It belongs to the universal ribosomal protein uL11 family. Part of the ribosomal stalk of the 50S ribosomal subunit. Interacts with L10 and the large rRNA to form the base of the stalk. L10 forms an elongated spine to which L12 dimers bind in a sequential fashion forming a multimeric L10(L12)X complex. Post-translationally, one or more lysine residues are methylated.

In terms of biological role, forms part of the ribosomal stalk which helps the ribosome interact with GTP-bound translation factors. The sequence is that of Large ribosomal subunit protein uL11 from Amoebophilus asiaticus (strain 5a2).